Reading from the N-terminus, the 435-residue chain is GTPase Der (435 aa).

EngA-type G domains follow at residues 8-169 (NLVA…NFEN) and 176-351 (FKIA…NNLS). GTP-binding positions include 14-21 (GKPNVGKS), 61-65 (DTGGI), 123-126 (NKLD), 182-189 (GKPNAGKS), 229-233 (DTAGI), and 294-297 (NKWD). A KH-like domain is found at 352–435 (REIKQNLLND…PINLVLKKNK (84 aa)).

Belongs to the TRAFAC class TrmE-Era-EngA-EngB-Septin-like GTPase superfamily. EngA (Der) GTPase family. Associates with the 50S ribosomal subunit.

GTPase that plays an essential role in the late steps of ribosome biogenesis. The protein is GTPase Der of Mycoplasmopsis pulmonis (strain UAB CTIP) (Mycoplasma pulmonis).